The primary structure comprises 170 residues: Peptide deformylase (170 aa).

Fe cation contacts are provided by cysteine 94 and histidine 136. Glutamate 137 is a catalytic residue. Histidine 140 is a Fe cation binding site.

This sequence belongs to the polypeptide deformylase family. Fe(2+) serves as cofactor.

The enzyme catalyses N-terminal N-formyl-L-methionyl-[peptide] + H2O = N-terminal L-methionyl-[peptide] + formate. Functionally, removes the formyl group from the N-terminal Met of newly synthesized proteins. Requires at least a dipeptide for an efficient rate of reaction. N-terminal L-methionine is a prerequisite for activity but the enzyme has broad specificity at other positions. This is Peptide deformylase from Stenotrophomonas maltophilia (strain R551-3).